The sequence spans 493 residues: Monocarboxylate transporter 1 (493 aa).

Residues 1 to 22 (MPPAIGGPVGYTPPDGGWGWAV) lie on the Cytoplasmic side of the membrane. Residues 23 to 44 (LVGAFISIGFSYAFPKSITVFF) traverse the membrane as a helical segment. Lysine 38 contributes to the (S)-lactate binding site. Over 45-55 (KEIEVIFSATT) the chain is Extracellular. A helical transmembrane segment spans residues 56 to 80 (SEVSWISSIMLAVMYAGGPISSILV). The Cytoplasmic portion of the chain corresponds to 81-84 (NKYG). Residues 85-105 (SRPVMIAGGCLSGCGLIAASF) form a helical membrane-spanning segment. The Extracellular segment spans residues 106-109 (CNTV). The helical transmembrane segment at 110-132 (QELYLCIGVIGGLGLAFNLNPAL) threads the bilayer. The Cytoplasmic segment spans residues 133 to 146 (TMIGKYFYKKRPLA). The chain crosses the membrane as a helical span at residues 147–169 (NGLAMAGSPVFLSTLAPLNQAFF). Residues 170 to 174 (DIFDW) are Extracellular-facing. The chain crosses the membrane as a helical span at residues 175–194 (RGSFLILGGLLLNCCVAGSL). Residues 195-254 (MRPIGPEQVKLEKLKSKESLQEAGKSDANTDLIGGSPKGEKLSVFQTINKFLDLSLFTHR) are Cytoplasmic-facing. A phosphoserine mark is found at serine 210, serine 213, and serine 220. A Phosphothreonine modification is found at threonine 224. Serine 230 is modified (phosphoserine). A helical membrane pass occupies residues 255–281 (GFLLYLSGNVVMFFGLFTPLVFLSSYG). Residues 282-288 (KSKDFSS) are Extracellular-facing. Residues 289 to 310 (EKSAFLLSILAFVDMVARPSMG) form a helical membrane-spanning segment. Aspartate 302 provides a ligand contact to H(+). Arginine 306 is a binding site for (S)-lactate. At 311-321 (LAANTKWIRPR) the chain is on the cytoplasmic side. A helical transmembrane segment spans residues 322 to 342 (IQYFFAASVVANGVCHLLAPL). Residues 343-346 (STTY) are Extracellular-facing. Residues 347–368 (VGFCVYAGVFGFAFGWLSSVLF) traverse the membrane as a helical segment. Residues 369–382 (ETLMDLIGPQRFSS) are Cytoplasmic-facing. The helical transmembrane segment at 383-403 (AVGLVTIVECCPVLLGPPLLG) threads the bilayer. The Extracellular segment spans residues 404-414 (RLNDMYGDYKY). Residues 415 to 436 (TYWACGVILIIAGIYLFIGMGI) form a helical membrane-spanning segment. Topologically, residues 437–493 (NYRLLAKEQKAEEKQKREGKEDEASTDVDEKPKETMKAAQSPQQHSSGDPTEEESPV) are cytoplasmic. Positions 447–472 (AEEKQKREGKEDEASTDVDEKPKETM) are enriched in basic and acidic residues. Residues 447 to 493 (AEEKQKREGKEDEASTDVDEKPKETMKAAQSPQQHSSGDPTEEESPV) are disordered. Phosphoserine is present on serine 461. The residue at position 462 (threonine 462) is a Phosphothreonine. A compositionally biased stretch (polar residues) spans 474–485 (AAQSPQQHSSGD). 4 positions are modified to phosphoserine: serine 477, serine 482, serine 483, and serine 491.

The protein belongs to the major facilitator superfamily. Monocarboxylate porter (TC 2.A.1.13) family. As to quaternary structure, interacts with isoform 2 of BSG; interaction mediates SLC16A1 targeting to the plasma membrane. Interacts with EMB; interaction mediates SLC16A1 targeting to the plasma membrane. Detected in liver, brain, spinal cord, spermatozoa, muscle, white adipose tissue and brown adipose tissue (at protein level). Widely expressed, except in pancreas, where expression is not detectable.

Its subcellular location is the cell membrane. It localises to the basolateral cell membrane. It is found in the apical cell membrane. It carries out the reaction (S)-lactate(in) + H(+)(in) = (S)-lactate(out) + H(+)(out). The enzyme catalyses acetate(out) + H(+)(out) = acetate(in) + H(+)(in). It catalyses the reaction acetoacetate(out) + H(+)(out) = acetoacetate(in) + H(+)(in). The catalysed reaction is pyruvate(out) + H(+)(out) = pyruvate(in) + H(+)(in). It carries out the reaction (R)-3-hydroxybutanoate(out) + H(+)(out) = (R)-3-hydroxybutanoate(in) + H(+)(in). The enzyme catalyses 3-methyl-2-oxobutanoate(out) + H(+)(out) = 3-methyl-2-oxobutanoate(in) + H(+)(in). It catalyses the reaction 4-methyl-2-oxopentanoate(out) + H(+)(out) = 4-methyl-2-oxopentanoate(in) + H(+)(in). The catalysed reaction is succinate(in) + 2 H(+)(in) = succinate(out) + 2 H(+)(out). Its function is as follows. Bidirectional proton-coupled monocarboxylate transporter. Catalyzes the rapid transport across the plasma membrane of many monocarboxylates such as lactate, pyruvate, acetate and the ketone bodies acetoacetate and beta-hydroxybutyrate, and thus contributes to the maintenance of intracellular pH. The transport direction is determined by the proton motive force and the concentration gradient of the substrate monocarboxylate. MCT1 is a major lactate exporter. Plays a role in cellular responses to a high-fat diet by modulating the cellular levels of lactate and pyruvate that contribute to the regulation of central metabolic pathways and insulin secretion, with concomitant effects on plasma insulin levels and blood glucose homeostasis. Facilitates the protonated monocarboxylate form of succinate export, that its transient protonation upon muscle cell acidification in exercising muscle and ischemic heart. Functions via alternate outward- and inward-open conformation states. Protonation and deprotonation of 302-Asp is essential for the conformational transition. The chain is Monocarboxylate transporter 1 (Slc16a1) from Mus musculus (Mouse).